The following is a 453-amino-acid chain: Bifunctional protein GlmU (453 aa).

The tract at residues 1–226 (MKFSAVILAA…PIEVEGVNDR (226 aa)) is pyrophosphorylase. Residues 8-11 (LAAG), Lys-22, Gln-73, 78-79 (GT), 100-102 (YGD), Gly-137, Glu-151, Asn-166, and Asn-224 contribute to the UDP-N-acetyl-alpha-D-glucosamine site. Mg(2+) is bound at residue Asp-102. Asn-224 is a Mg(2+) binding site. Residues 227 to 247 (AQLARLERAFQAAQAKKLLEQ) form a linker region. The N-acetyltransferase stretch occupies residues 248-453 (GVMLRDPARF…TGWQRPVKKK (206 aa)). 2 residues coordinate UDP-N-acetyl-alpha-D-glucosamine: Arg-330 and Lys-348. His-360 acts as the Proton acceptor in catalysis. UDP-N-acetyl-alpha-D-glucosamine-binding residues include Tyr-363 and Asn-374. Residues Ala-377, 383–384 (NY), Ser-402, Ala-420, and Arg-437 each bind acetyl-CoA.

This sequence in the N-terminal section; belongs to the N-acetylglucosamine-1-phosphate uridyltransferase family. In the C-terminal section; belongs to the transferase hexapeptide repeat family. As to quaternary structure, homotrimer. Mg(2+) is required as a cofactor.

It is found in the cytoplasm. It catalyses the reaction alpha-D-glucosamine 1-phosphate + acetyl-CoA = N-acetyl-alpha-D-glucosamine 1-phosphate + CoA + H(+). It carries out the reaction N-acetyl-alpha-D-glucosamine 1-phosphate + UTP + H(+) = UDP-N-acetyl-alpha-D-glucosamine + diphosphate. It participates in nucleotide-sugar biosynthesis; UDP-N-acetyl-alpha-D-glucosamine biosynthesis; N-acetyl-alpha-D-glucosamine 1-phosphate from alpha-D-glucosamine 6-phosphate (route II): step 2/2. Its pathway is nucleotide-sugar biosynthesis; UDP-N-acetyl-alpha-D-glucosamine biosynthesis; UDP-N-acetyl-alpha-D-glucosamine from N-acetyl-alpha-D-glucosamine 1-phosphate: step 1/1. The protein operates within bacterial outer membrane biogenesis; LPS lipid A biosynthesis. Catalyzes the last two sequential reactions in the de novo biosynthetic pathway for UDP-N-acetylglucosamine (UDP-GlcNAc). The C-terminal domain catalyzes the transfer of acetyl group from acetyl coenzyme A to glucosamine-1-phosphate (GlcN-1-P) to produce N-acetylglucosamine-1-phosphate (GlcNAc-1-P), which is converted into UDP-GlcNAc by the transfer of uridine 5-monophosphate (from uridine 5-triphosphate), a reaction catalyzed by the N-terminal domain. The sequence is that of Bifunctional protein GlmU from Vibrio vulnificus (strain CMCP6).